The primary structure comprises 195 residues: Probable GTP-binding protein EngB (195 aa).

One can recognise an EngB-type G domain in the interval 22–195 (GLPEIALAGR…WNAILAKINK (174 aa)). GTP is bound by residues 30-37 (GRSNVGKS), 57-61 (GKTQT), 75-78 (DVPG), 142-145 (TKAD), and 174-176 (FSS). Mg(2+)-binding residues include S37 and T59.

This sequence belongs to the TRAFAC class TrmE-Era-EngA-EngB-Septin-like GTPase superfamily. EngB GTPase family. It depends on Mg(2+) as a cofactor.

Its function is as follows. Necessary for normal cell division and for the maintenance of normal septation. The protein is Probable GTP-binding protein EngB of Bacillus pumilus (strain SAFR-032).